We begin with the raw amino-acid sequence, 194 residues long: Probable GTP-binding protein EngB (194 aa).

Residues 22-194 form the EngB-type G domain; that stretch reads KIPQIAIVGK…LRIFEEVIEK (173 aa). Residues 30 to 37, 57 to 61, 75 to 78, 142 to 145, and 173 to 175 contribute to the GTP site; these read GKSNVGKS, GKTRG, DLPG, TKAD, and FSA. Residues Ser37 and Thr59 each coordinate Mg(2+).

This sequence belongs to the TRAFAC class TrmE-Era-EngA-EngB-Septin-like GTPase superfamily. EngB GTPase family. Mg(2+) is required as a cofactor.

Its function is as follows. Necessary for normal cell division and for the maintenance of normal septation. The sequence is that of Probable GTP-binding protein EngB from Caldanaerobacter subterraneus subsp. tengcongensis (strain DSM 15242 / JCM 11007 / NBRC 100824 / MB4) (Thermoanaerobacter tengcongensis).